The sequence spans 309 residues: Peptide methionine sulfoxide reductase MsrA/MsrB (309 aa).

Positions 1 to 153 (MIYLAGGCFW…PNGYCHIDIN (153 aa)) are peptide methionine sulfoxide reductase A. The active site involves Cys-8. The region spanning 170 to 293 (ATEIKEKLSA…NSLSITFIPK (124 aa)) is the MsrB domain. Residue Cys-282 is the Nucleophile of the active site.

This sequence in the N-terminal section; belongs to the MsrA Met sulfoxide reductase family. It in the C-terminal section; belongs to the MsrB Met sulfoxide reductase family.

The enzyme catalyses L-methionyl-[protein] + [thioredoxin]-disulfide + H2O = L-methionyl-(S)-S-oxide-[protein] + [thioredoxin]-dithiol. It carries out the reaction [thioredoxin]-disulfide + L-methionine + H2O = L-methionine (S)-S-oxide + [thioredoxin]-dithiol. The catalysed reaction is L-methionyl-[protein] + [thioredoxin]-disulfide + H2O = L-methionyl-(R)-S-oxide-[protein] + [thioredoxin]-dithiol. Functionally, has an important function as a repair enzyme for proteins that have been inactivated by oxidation. Catalyzes the reversible oxidation-reduction of methionine sulfoxide in proteins to methionine. The chain is Peptide methionine sulfoxide reductase MsrA/MsrB (msrAB) from Streptococcus pyogenes serotype M1.